A 194-amino-acid chain; its full sequence is ATP-dependent Clp protease proteolytic subunit (194 aa).

Residue Ser-97 is the Nucleophile of the active site. The active site involves His-122.

Belongs to the peptidase S14 family. In terms of assembly, fourteen ClpP subunits assemble into 2 heptameric rings which stack back to back to give a disk-like structure with a central cavity, resembling the structure of eukaryotic proteasomes.

Its subcellular location is the cytoplasm. The enzyme catalyses Hydrolysis of proteins to small peptides in the presence of ATP and magnesium. alpha-casein is the usual test substrate. In the absence of ATP, only oligopeptides shorter than five residues are hydrolyzed (such as succinyl-Leu-Tyr-|-NHMec, and Leu-Tyr-Leu-|-Tyr-Trp, in which cleavage of the -Tyr-|-Leu- and -Tyr-|-Trp bonds also occurs).. In terms of biological role, cleaves peptides in various proteins in a process that requires ATP hydrolysis. Has a chymotrypsin-like activity. Plays a major role in the degradation of misfolded proteins. The chain is ATP-dependent Clp protease proteolytic subunit from Thermus thermophilus (strain ATCC BAA-163 / DSM 7039 / HB27).